The following is a 326-amino-acid chain: MRIFPVFLLTFSLFLIKEEIVTAEVKVSAPVVNQSGIKLNLERQFTGSDVAINRIHFSPDGQFLLTAAADGVGTLWTKEGEMLGQLQGQKPPMFNARLSPDRQILITTGYDGTIRLWNLQGELLEEQQPHRAAVADAIFSPDSQIIVTCSDDGQTKIFTRQGQEIASVLKSGTARNLAYHPQGLLIASVSDSGSLHLINPNGKIEREISTGQGRINNVNFSPNGEQLLTSGINGSAKLWNLAGELIHEYKVVPTGWVNSAQFYPKGEWLATASDDGTIRFWQKDGQLIYELPLVNARLTSLSFSPDGKQLAATSSQGQVWVFNLSY.

WD repeat units lie at residues 47-77 (GSDV…TLWT), 88-118 (GQKP…RLWN), 129-159 (PHRA…KIFT), 169-199 (LKSG…HLIN), 210-240 (TGQG…KLWN), and 252-282 (VPTG…RFWQ).

The sequence is that of WD repeat-containing protein slr1409 from Synechocystis sp. (strain ATCC 27184 / PCC 6803 / Kazusa).